Reading from the N-terminus, the 156-residue chain is Putative pre-16S rRNA nuclease (156 aa).

This sequence belongs to the YqgF nuclease family.

Its subcellular location is the cytoplasm. Its function is as follows. Could be a nuclease involved in processing of the 5'-end of pre-16S rRNA. This is Putative pre-16S rRNA nuclease from Ehrlichia ruminantium (strain Welgevonden).